We begin with the raw amino-acid sequence, 147 residues long: Prefoldin subunit alpha (147 aa).

Belongs to the prefoldin alpha subunit family. Heterohexamer of two alpha and four beta subunits.

The protein localises to the cytoplasm. Its function is as follows. Molecular chaperone capable of stabilizing a range of proteins. Seems to fulfill an ATP-independent, HSP70-like function in archaeal de novo protein folding. This Saccharolobus islandicus (strain Y.N.15.51 / Yellowstone #2) (Sulfolobus islandicus) protein is Prefoldin subunit alpha.